Here is a 140-residue protein sequence, read N- to C-terminus: ATP synthase epsilon chain (140 aa).

Belongs to the ATPase epsilon chain family. As to quaternary structure, F-type ATPases have 2 components, CF(1) - the catalytic core - and CF(0) - the membrane proton channel. CF(1) has five subunits: alpha(3), beta(3), gamma(1), delta(1), epsilon(1). CF(0) has three main subunits: a, b and c.

The protein resides in the cell inner membrane. In terms of biological role, produces ATP from ADP in the presence of a proton gradient across the membrane. The chain is ATP synthase epsilon chain from Stenotrophomonas maltophilia (strain R551-3).